A 320-amino-acid chain; its full sequence is Glucokinase (320 aa).

The protein belongs to the ROK (NagC/XylR) family. In terms of assembly, monomer. A divalent metal cation serves as cofactor.

The enzyme catalyses D-glucose + ATP = D-glucose 6-phosphate + ADP + H(+). Catalyzes the phosphorylation of D-glucose to D-glucose 6-phosphate using ATP as the phosphate donor. ITP can also serve as an effective phosphoryl donor. According to Hansen et al., the enzyme has a broad hexose specificity, and in addition to glucose, which shows the highest catalytic efficiency, it can also phosphorylate fructose, mannose, glucosamine, N-acetylglucosamine, N-acetylmannosamine and 2-deoxyglucose. However, according to Sakuraba et al., the enzyme shows strict specificity for D-glucose. In Aeropyrum pernix (strain ATCC 700893 / DSM 11879 / JCM 9820 / NBRC 100138 / K1), this protein is Glucokinase.